Here is a 340-residue protein sequence, read N- to C-terminus: Fructoselysine 6-phosphate deglycase (340 aa).

SIS domains lie at 35 to 169 (IVEE…RLAP) and 201 to 331 (LGEL…PDER).

In terms of assembly, homododecamer.

The catalysed reaction is N(6)-(6-phospho-D-fructosyl)-L-lysine + H2O = D-glucose 6-phosphate + L-lysine. Its pathway is carbohydrate metabolism; fructoselysine degradation; D-glucose 6-phosphate and lysine from fructoselysine: step 2/2. Functionally, catalyzes the reversible conversion of fructoselysine 6-phosphate to glucose 6-phosphate and lysine. Functions in a fructoselysine degradation pathway that allows E.coli to grow on fructoselysine or psicoselysine. The chain is Fructoselysine 6-phosphate deglycase (frlB) from Escherichia coli O157:H7.